Reading from the N-terminus, the 155-residue chain is Small ribosomal subunit protein uS7c (155 aa).

It belongs to the universal ribosomal protein uS7 family. In terms of assembly, part of the 30S ribosomal subunit.

The protein resides in the plastid. The protein localises to the chloroplast. In terms of biological role, one of the primary rRNA binding proteins, it binds directly to 16S rRNA where it nucleates assembly of the head domain of the 30S subunit. The chain is Small ribosomal subunit protein uS7c (rps7) from Typha angustifolia (Narrow leaf cattail).